We begin with the raw amino-acid sequence, 72 residues long: MKEGIHPKYNEIIVKCLCGNSFESRSTKAEISTEVCSQCHPFYTGKQKLMDTAGRVERFRKRYNIAAAPEES.

Positions 16, 18, 36, and 39 each coordinate Zn(2+).

Belongs to the bacterial ribosomal protein bL31 family. Type A subfamily. As to quaternary structure, part of the 50S ribosomal subunit. Zn(2+) is required as a cofactor.

Its function is as follows. Binds the 23S rRNA. This is Large ribosomal subunit protein bL31 from Geobacter sp. (strain M21).